We begin with the raw amino-acid sequence, 158 residues long: Phosphopantetheine adenylyltransferase (158 aa).

S9 provides a ligand contact to substrate. Residues 9–10 (SF) and H17 contribute to the ATP site. Substrate contacts are provided by K41, V73, and K87. Residues 88–90 (GLR), E98, and 122–128 (YSFVSSS) each bind ATP.

Belongs to the bacterial CoaD family. Homohexamer. Requires Mg(2+) as cofactor.

The protein localises to the cytoplasm. The catalysed reaction is (R)-4'-phosphopantetheine + ATP + H(+) = 3'-dephospho-CoA + diphosphate. It participates in cofactor biosynthesis; coenzyme A biosynthesis; CoA from (R)-pantothenate: step 4/5. In terms of biological role, reversibly transfers an adenylyl group from ATP to 4'-phosphopantetheine, yielding dephospho-CoA (dPCoA) and pyrophosphate. This is Phosphopantetheine adenylyltransferase from Mycobacterium sp. (strain JLS).